The following is a 271-amino-acid chain: Ribosomal RNA small subunit methyltransferase A (271 aa).

His18, Leu20, Gly45, Glu66, Asp91, and Asn113 together coordinate S-adenosyl-L-methionine.

This sequence belongs to the class I-like SAM-binding methyltransferase superfamily. rRNA adenine N(6)-methyltransferase family. RsmA subfamily.

The protein localises to the cytoplasm. The catalysed reaction is adenosine(1518)/adenosine(1519) in 16S rRNA + 4 S-adenosyl-L-methionine = N(6)-dimethyladenosine(1518)/N(6)-dimethyladenosine(1519) in 16S rRNA + 4 S-adenosyl-L-homocysteine + 4 H(+). Its function is as follows. Specifically dimethylates two adjacent adenosines (A1518 and A1519) in the loop of a conserved hairpin near the 3'-end of 16S rRNA in the 30S particle. May play a critical role in biogenesis of 30S subunits. This Baumannia cicadellinicola subsp. Homalodisca coagulata protein is Ribosomal RNA small subunit methyltransferase A.